Consider the following 346-residue polypeptide: UDP-3-O-acylglucosamine N-acyltransferase (346 aa).

His-253 acts as the Proton acceptor in catalysis.

It belongs to the transferase hexapeptide repeat family. LpxD subfamily. Homotrimer.

It carries out the reaction a UDP-3-O-[(3R)-3-hydroxyacyl]-alpha-D-glucosamine + a (3R)-hydroxyacyl-[ACP] = a UDP-2-N,3-O-bis[(3R)-3-hydroxyacyl]-alpha-D-glucosamine + holo-[ACP] + H(+). It participates in bacterial outer membrane biogenesis; LPS lipid A biosynthesis. Functionally, catalyzes the N-acylation of UDP-3-O-acylglucosamine using 3-hydroxyacyl-ACP as the acyl donor. Is involved in the biosynthesis of lipid A, a phosphorylated glycolipid that anchors the lipopolysaccharide to the outer membrane of the cell. This chain is UDP-3-O-acylglucosamine N-acyltransferase, found in Rickettsia akari (strain Hartford).